The primary structure comprises 303 residues: Uracil phosphoribosyltransferase (303 aa).

Positions 1–86 are unknown; it reads MHIIMKTILA…RYVSSTPTDS (86 aa). A UPRTase region spans residues 87–303; the sequence is LSSKPLAAVY…DRLCGTSNPS (217 aa). 5-phospho-alpha-D-ribose 1-diphosphate is bound by residues arginine 170, arginine 195, and 222-230; that span reads DPMLATGGS. Residues isoleucine 285 and 290–292 contribute to the uracil site; that span reads GDA. Aspartate 291 provides a ligand contact to 5-phospho-alpha-D-ribose 1-diphosphate.

Belongs to the UPRTase family. The cofactor is Mg(2+).

It catalyses the reaction UMP + diphosphate = 5-phospho-alpha-D-ribose 1-diphosphate + uracil. It functions in the pathway pyrimidine metabolism; UMP biosynthesis via salvage pathway; UMP from uracil: step 1/1. With respect to regulation, allosterically activated by GTP. Functionally, catalyzes the conversion of uracil and 5-phospho-alpha-D-ribose 1-diphosphate (PRPP) to UMP and diphosphate. This is Uracil phosphoribosyltransferase (upp) from Chlamydia muridarum (strain MoPn / Nigg).